Consider the following 347-residue polypeptide: Protein NDL3 (347 aa).

This sequence belongs to the NDRG family. As to quaternary structure, interacts with the heterodimers formed by GB1 and GG1, or GB1 and GG2. Interacts with RGS1.

The protein resides in the cytoplasm. Involved in a signaling pathway that modulates root auxin transport and auxin gradients. Acts partially by positively regulating the auxin carrier PIN2 and AUX1. Acts, together with GB1 as positive regulator of meristem initiation and branching. GB1 and NDL3 positively regulate basipetal inflorescence auxin transport and modulate MAX2 expression in shoots, which regulates organ and lateral meristem formation by the establishment and maintenance of auxin gradients. The polypeptide is Protein NDL3 (Arabidopsis thaliana (Mouse-ear cress)).